The primary structure comprises 244 residues: Protein TIFY 10b (244 aa).

The Tify domain maps to 97–132 (QEPEKRQLTIFYGGKVLVFNDFPADKAKGLMQLASK). The short motif at 185 to 210 (PIARKASLHRFLEKRKDRLNAKTPYQ) is the Jas element. A Nuclear localization signal motif is present at residues 187-194 (ARKASLHR). The disordered stretch occupies residues 193–244 (HRFLEKRKDRLNAKTPYQASPSDATPVKKEPESQPWLGLGPNAVVKPIERGQ). The segment covering 194–204 (RFLEKRKDRLN) has biased composition (basic and acidic residues).

It belongs to the TIFY/JAZ family. Ubiquitinated. Targeted for degradation by the SCF(COI1) E3 ubiquitin ligase-proteasome pathway during jasmonate signaling.

It localises to the nucleus. In terms of biological role, repressor of jasmonate responses. The sequence is that of Protein TIFY 10b from Oryza sativa subsp. indica (Rice).